Here is a 60-residue protein sequence, read N- to C-terminus: Large ribosomal subunit protein uL30 (60 aa).

Belongs to the universal ribosomal protein uL30 family. As to quaternary structure, part of the 50S ribosomal subunit.

The protein is Large ribosomal subunit protein uL30 of Streptococcus equi subsp. equi (strain 4047).